Consider the following 411-residue polypeptide: uncharacterized protein (411 aa).

Residues 32 to 108 (LGGDPAPKPT…PEHPRRIPIP (77 aa)) form a disordered region.

This is an uncharacterized protein from Ictalurid herpesvirus 1 (strain Auburn) (IcHV-1).